Reading from the N-terminus, the 205-residue chain is Holliday junction branch migration complex subunit RuvA (205 aa).

The domain I stretch occupies residues 1–64 (MIGRLKGILI…ENLHQLFGFA (64 aa)). The domain II stretch occupies residues 65 to 143 (EQRDRSLFRT…NWDLPQGDML (79 aa)). The segment at 144–153 (AHGEIQAIAS) is flexible linker. Residues 153 to 205 (SDNDIYAEAESALIALGYKPVDAAKMVASAAKQKPEARSEELIRIALRSLAGV) are domain III.

It belongs to the RuvA family. Homotetramer. Forms an RuvA(8)-RuvB(12)-Holliday junction (HJ) complex. HJ DNA is sandwiched between 2 RuvA tetramers; dsDNA enters through RuvA and exits via RuvB. An RuvB hexamer assembles on each DNA strand where it exits the tetramer. Each RuvB hexamer is contacted by two RuvA subunits (via domain III) on 2 adjacent RuvB subunits; this complex drives branch migration. In the full resolvosome a probable DNA-RuvA(4)-RuvB(12)-RuvC(2) complex forms which resolves the HJ.

The protein resides in the cytoplasm. Functionally, the RuvA-RuvB-RuvC complex processes Holliday junction (HJ) DNA during genetic recombination and DNA repair, while the RuvA-RuvB complex plays an important role in the rescue of blocked DNA replication forks via replication fork reversal (RFR). RuvA specifically binds to HJ cruciform DNA, conferring on it an open structure. The RuvB hexamer acts as an ATP-dependent pump, pulling dsDNA into and through the RuvAB complex. HJ branch migration allows RuvC to scan DNA until it finds its consensus sequence, where it cleaves and resolves the cruciform DNA. The polypeptide is Holliday junction branch migration complex subunit RuvA (Cellvibrio japonicus (strain Ueda107) (Pseudomonas fluorescens subsp. cellulosa)).